The sequence spans 364 residues: 1-acyl-sn-glycerol-3-phosphate acyltransferase epsilon (364 aa).

The next 2 helical transmembrane spans lie at 15–35 and 61–81; these read LLPSVVLLGTAPTYVLAWGVW and MVLFFFENYTGVQILLYGDLP. The short motif at 93 to 98 is the HXXXXD motif element; the sequence is HQSTVD. The chain crosses the membrane as a helical span at residues 344–364; it reads LYVNTWIYGTLLGCLWVTIKA.

It belongs to the 1-acyl-sn-glycerol-3-phosphate acyltransferase family. In terms of tissue distribution, widely expressed.

Its subcellular location is the endoplasmic reticulum membrane. It localises to the nucleus envelope. The protein localises to the mitochondrion. It carries out the reaction a 1-acyl-sn-glycero-3-phosphate + an acyl-CoA = a 1,2-diacyl-sn-glycero-3-phosphate + CoA. The enzyme catalyses 1-(9Z-octadecenoyl)-sn-glycero-3-phosphate + tetradecanoyl-CoA = 1-(9Z)-octadecenoyl-2-tetradecanoyl-sn-glycero-3-phosphate + CoA. It catalyses the reaction pentadecanoyl-CoA + 1-(9Z-octadecenoyl)-sn-glycero-3-phosphate = 1-(9Z)-octadecenoyl-2-pentadecanoyl-sn-glycero-3-phosphate + CoA. The catalysed reaction is 1-(9Z-octadecenoyl)-sn-glycero-3-phosphate + octadecanoyl-CoA = 1-(9Z-octadecenoyl)-2-octadecanoyl-sn-glycero-3-phosphate + CoA. It carries out the reaction nonadecanoyl-CoA + 1-(9Z-octadecenoyl)-sn-glycero-3-phosphate = 1-(9Z)-octadecenoyl-2-nonadecanoyl-sn-glycero-3-phosphate + CoA. The enzyme catalyses 1-(9Z-octadecenoyl)-sn-glycero-3-phosphoethanolamine + (9Z)-octadecenoyl-CoA = 1,2-di-(9Z-octadecenoyl)-sn-glycero-3-phosphoethanolamine + CoA. It catalyses the reaction 1-(9Z-octadecenoyl)-sn-glycero-3-phosphocholine + (9Z)-octadecenoyl-CoA = 1,2-di-(9Z-octadecenoyl)-sn-glycero-3-phosphocholine + CoA. The catalysed reaction is 1-(9Z-octadecenoyl)-sn-glycero-3-phospho-(1D-myo-inositol) + (5Z,8Z,11Z,14Z)-eicosatetraenoyl-CoA = 1-(9Z-octadecenoyl)-2-(5Z,8Z,11Z,14Z-eicosatetraenoyl)-sn-glycero-3-phospho-1D-myo-inositol + CoA. It carries out the reaction 1-(9Z-octadecenoyl)-sn-glycero-3-phospho-L-serine + (9Z)-octadecenoyl-CoA = 1,2-di-(9Z)-octadecenoyl-sn-glycero-3-phospho-L-serine + CoA. The enzyme catalyses 1-(9Z-octadecenoyl)-sn-glycero-3-phospho-L-serine + (5Z,8Z,11Z,14Z)-eicosatetraenoyl-CoA = 1-(9Z-octadecenoyl)-2-(5Z,8Z,11Z,14Z-eicosatetraenoyl)-sn-glycero-3-phospho-L-serine + CoA. It catalyses the reaction 1-hexadecanoyl-sn-glycero-3-phosphate + (9Z)-octadecenoyl-CoA = 1-hexadecanoyl-2-(9Z-octadecenoyl)-sn-glycero-3-phosphate + CoA. The catalysed reaction is 1-heptadecanoyl-sn-glycero-3-phosphate + (9Z)-octadecenoyl-CoA = 1-heptadecanoyl-2-(9Z)-octadecenoyl-sn-glycero-3-phosphate + CoA. It carries out the reaction 1-(5Z,8Z,11Z,14Z-eicosatetraenoyl)-sn-glycero-3-phosphate + (9Z)-octadecenoyl-CoA = 1-(5Z,8Z,11Z,14Z)-eicosatetraenoyl-2-(9Z)-octadecenoyl-sn-glycero-3-phosphate + CoA. The enzyme catalyses 1-octadecanoyl-sn-glycero-3-phosphate + (9Z)-octadecenoyl-CoA = 1-octadecanoyl-2-(9Z-octadecenoyl)-sn-glycero-3-phosphate + CoA. It catalyses the reaction 1-(9Z-octadecenoyl)-sn-glycero-3-phosphate + (5Z,8Z,11Z,14Z)-eicosatetraenoyl-CoA = 1-(9Z)-octadecenoyl-2-(5Z,8Z,11Z,14Z)-eicosatetraenoyl-sn-glycero-3-phosphate + CoA. The catalysed reaction is heptadecanoyl-CoA + 1-(9Z-octadecenoyl)-sn-glycero-3-phosphate = 1-(9Z)-octadecenoyl-2-heptadecanoyl-sn-glycero-3-phosphate + CoA. It carries out the reaction 1-(9Z-octadecenoyl)-sn-glycero-3-phosphocholine + (5Z,8Z,11Z,14Z)-eicosatetraenoyl-CoA = 1-(9Z)-octadecenoyl-2-(5Z,8Z,11Z,14Z)-icosatetraenoyl-sn-glycero-3-phosphocholine + CoA. The enzyme catalyses 1-(9Z-octadecenoyl)-sn-glycero-3-phosphate + (9Z)-octadecenoyl-CoA = 1,2-di-(9Z-octadecenoyl)-sn-glycero-3-phosphate + CoA. It catalyses the reaction 1-(9Z-octadecenoyl)-sn-glycero-3-phosphate + hexadecanoyl-CoA = 1-hexadecanoyl-2-(9Z-octadecenoyl)-sn-glycero-3-phosphate + CoA. It functions in the pathway phospholipid metabolism; CDP-diacylglycerol biosynthesis; CDP-diacylglycerol from sn-glycerol 3-phosphate: step 2/3. In terms of biological role, converts 1-acyl-sn-glycerol-3-phosphate (lysophosphatidic acid or LPA) into 1,2-diacyl-sn-glycerol-3-phosphate (phosphatidic acid or PA) by incorporating an acyl moiety at the sn-2 position of the glycerol backbone. Acts on LPA containing saturated or unsaturated fatty acids C15:0-C20:4 at the sn-1 position using C18:1-CoA as the acyl donor. Also acts on lysophosphatidylethanolamine using oleoyl-CoA, but not arachidonoyl-CoA, and lysophosphatidylinositol using arachidonoyl-CoA, but not oleoyl-CoA. Activity toward lysophosphatidylglycerol not detectable. The protein is 1-acyl-sn-glycerol-3-phosphate acyltransferase epsilon (AGPAT5) of Homo sapiens (Human).